The sequence spans 464 residues: MDLKLYDTLTKDKRAFVPLDPRNVRMYVCGPTVYDFAHIGNARPVIVFDVLFRLLRHIYGDSHVTYVRNITDVDDKINDRALRDYPGLPLNEAIRKVTEKTATQFRADVDALGCLQPTVEPRATDFVLPRPDGKTDMVSLIKTLIDRGHAYEANGEVLFDTASMPDYGQLSGRKLEEQQAGARIAVDAHKKHAADFVLWKQSSADEPGWDSPWGRGRPGWHIECSAMSAAYLGETFDIHGGGLDLIFPHHENEIAQSRCAHGTHAMANYWLHNGFLQVEGEKMSKSLGNFVTINELLQDWPGEVVRLNMLKTHYRSPIDWTLKGLEESAKALDDWYATAGDAAGSAPADTVMETLCDDLNTAQTVAALHGLRHQAEKGDAAQRDQLAASLRFLGFFSETKDAWDARKREASGVDAAQVTALIADRTAARARKDWKESDRIRDELAAMGVAIKDSKEGTTWEIAR.

A Zn(2+)-binding site is contributed by cysteine 29. A 'HIGH' region motif is present at residues 31 to 41 (PTVYDFAHIGN). Residues cysteine 224, histidine 249, and glutamate 253 each contribute to the Zn(2+) site. Positions 282–286 (KMSKS) match the 'KMSKS' region motif. Lysine 285 contacts ATP.

It belongs to the class-I aminoacyl-tRNA synthetase family. In terms of assembly, monomer. Zn(2+) serves as cofactor.

Its subcellular location is the cytoplasm. The catalysed reaction is tRNA(Cys) + L-cysteine + ATP = L-cysteinyl-tRNA(Cys) + AMP + diphosphate. The sequence is that of Cysteine--tRNA ligase from Afipia carboxidovorans (strain ATCC 49405 / DSM 1227 / KCTC 32145 / OM5) (Oligotropha carboxidovorans).